Here is a 2013-residue protein sequence, read N- to C-terminus: MGDEEAPSGSIEDRINHKNWKWRVSGLEELTTKFRNSIEGSGPLFNEWGPQFKKILADINPMSQERALEPLSAFIDRCDCVNKFAASYVGVLVEKLFASTRPRAKEKTIECLLLTIEADSAEPVVEALLKGTSSTSPKILLASLAALTQALKTFGPKQIPVKLILKQFSPWFENRDKGIRDQASELFIEIYRWIGKALIPLISEALTPIQLKALQDQFEKLPTDPAVPLKYTRSEAAKALANASKGIQAKPEVVEEIDPYSLMTAVNILPKLTSEFYEGLQAKKWQERSEQMDKLVTILTNTPKIETADFSELCKALKKILADVNVMIVQKAVVSIGLLADSLRGGFTSYVKPFITPILEKFKEKKTSVLQSVHTTMDSLVGKSISLSDIIDELTATMQSKVPQIKQEVLVFICNSITNTKKPADITKVTKQLTKIFMEALNDTDSNIRDNASKAFAALGGIIGERAMTPYLNQIDPIKAKKIKDNMPAVATPVTITPQPLAPVDLKDIDLPVSSSNKKPAAATGNSKSSSTTTPTGRSSNSSPLPPPPSSSDDIKNKLIGAGIVNNEIIEGLGKTQWKDRLQAVDDILENVKGLTADSINGMSESIIQLLCDKPSLKESNFQVLSSIFSIFIQCCKNDSNFTQQRCANSYLTTCIEKLTDVKLKEISSELLFSTGESITPHAVFTSIYQFTSNHKNPKIIADSLVWIQQAIDEFGIGCCSNGIQQLKPLLDYTKQCLESTNPDVKKSAIKLLCTIKINIGATLTDFLGDVKKPTMEVLDREFQKIRDQKPPVPNRQWKGMPPPGSAPVQIEFPRVDISVKLTPAIITNLSDANWKTRSDALDEIERIIIDANRKIQPKLGGLIPALKNRLTDNNQKCTITTLNIIGMLSQAMGGQSFEKHARLLIPGILLLLGDSKKPVRDAVISCMNVIVQSDLGFDVFIGSLAAPMIQESAFTRKESLAWTIVNVTNMKAAPIPSEINTLAKGIISCLQDKSAEIRSLADNLLSILCTQIPLIEFKKELKHVKPASQPSIQTILDKYYQKTGQPIPPPSKTKQSTSSSSSSSSTTSQQSSTPSSPQPIRQQQQQQQQQPTQPQQQQQQQQRRSILQSNNGASNCEFIIFDINGKMNRQKTNQIPSWHFIEPTEEVVEILQDQVLQCFTEEFANLMFSSLPSNSQHMSDLMIGMIEQNPEAIISVLDILFRWITFKLFDTGLASQKRVLKILEILLNKLIDSEYSIGEYEASCLVPILLEKSGSATNEQIKQIFKQSIQQLEELCLPNVLFRFAIEMVTSQNWRTRVEVLNVMASIIDKNGASVCGNLKVVIPLITQNLNDSQSKQSSLLCLNKLYSHIKDECFKYSNISQQDKILIIGNNNNNNNNNNNNNNNNNNNNVQQQQQQQQQQQQQQPRKSLSTDEMSTQLIGCLELLKNYSITKENIEHTVEALKQFSGLMANGKLDDVFVNFAEEYFLVLTSILADTFPQVSKDATILRLCKYLIHTIISILSNKVVAKQCNVRCLEIVLNETIKLYSLAESNSSKQGTESELSKAFNQILLRILQNCNSTILFSTLLQMMSRTDNDQSIQHPGKYNDLLLRCLLRATKSLTTPSILEELNVETVLSEINSFLKSNPSLDEITRKTTKTLTSELYQNRTNQVVKFTKDIISKGQQQKYQYLLNLLIELVPKQFEDLINGNGNGNRISSGGSNNNNNNGGRVSSGGNNNNNSGRENINNININSSLDSPINDHHNSNNTTTTTTRSRTSTGSSNSQQQQLPTTSANTTTTTTTTTTTGKTQSTLSTLKINKEPRDYSGKTDSQKKELLIEIFKKIGNKDLTLDGIHDLYFFIREYPDYDITPNLNSSSQQFQAYITRNLKKIKDSMDAPKDKDDEVVNYQERLKVIQNTFYNQHNQPSSQVVNNNNNNNNNNNNNNNNNINNNNNNNNNSGGNENIAPQLSNTASMASNTLQRLRTLNPDQNSGSNNNNSHQNSPSTSSSNDLNSTVASLRQRLAQLTSKSNE.

5 HEAT repeats span residues 115-153, 158-196, 200-238, 348-386, and 427-465; these read TIEA…ALKT, QIPV…WIGK, PLIS…EAAK, TSYV…KSIS, and TKVT…IIGE. Residues 512 to 557 are disordered; that stretch reads PVSSSNKKPAAATGNSKSSSTTTPTGRSSNSSPLPPPPSSSDDIKN. Low complexity predominate over residues 524–543; sequence TGNSKSSSTTTPTGRSSNSS. HEAT repeat units follow at residues 724–762, 816–854, 857–895, 899–937, and 977–1015; these read IQQL…NIGA, VDIS…DANR, QPKL…AMGG, EKHA…SDLG, and PSEI…QIPL. The tract at residues 1043–1109 is disordered; that stretch reads KTGQPIPPPS…QQQQRRSILQ (67 aa). Over residues 1053–1106 the composition is skewed to low complexity; the sequence is KTKQSTSSSSSSSSTTSQQSSTPSSPQPIRQQQQQQQQQPTQPQQQQQQQQRRS. HEAT repeat units follow at residues 1240–1279, 1281–1314, and 1317–1353; these read EYEA…LCLP, VLFR…KNGA, and CGNL…HIKD. Low complexity-rich tracts occupy residues 1372–1406, 1695–1735, and 1746–1796; these read NNNN…QQQQ, NRIS…INSS, and SNNT…TLST. Disordered regions lie at residues 1372-1413, 1695-1809, 1905-1949, and 1966-1995; these read NNNN…SLST, NRIS…YSGK, NQPS…IAPQ, and TLNP…DLNS. Residues 1799–1809 show a composition bias toward basic and acidic residues; that stretch reads INKEPRDYSGK. The segment covering 1913–1939 has biased composition (low complexity); the sequence is NNNNNNNNNNNNNNNNNINNNNNNNNN. The segment covering 1940-1949 has biased composition (polar residues); sequence SGGNENIAPQ. The segment covering 1967 to 1995 has biased composition (low complexity); that stretch reads LNPDQNSGSNNNNSHQNSPSTSSSNDLNS.

It belongs to the TOG/XMAP215 family. As to quaternary structure, interacts with eb1 at the microtubule tip, centrosome and kinetochore. Interacts with lis1 in the cortical attachment of microtubules.

It localises to the cytoplasm. It is found in the cytoskeleton. The protein localises to the microtubule organizing center. The protein resides in the centrosome. Its subcellular location is the chromosome. It localises to the centromere. It is found in the kinetochore. Its function is as follows. Involved in regulation of microtubule dynamics. Regulates the interaction of microtubules tips with the centrosome and cell cortex. The polypeptide is Centrosomal protein 224 (mtaA) (Dictyostelium discoideum (Social amoeba)).